The chain runs to 1623 residues: MGFEFIEWYCKPVPNGVWTKQVANAFGAYTPCATDSFVLGISQLVLLVLCLYRIWLALKDHKVERFCLRSRLYNYFLALLAAYATAEPLFRLIMGISVLDFDGPGLPPFEAFGLGVKAFAWGAVMVMILMETKIYIRELRWYVRFAVIYALVGDMVLLNLVLSVKEYYSSYVLYLYTSEVGAQVLFGILLFMHLPNLDTYPGYMPVRSETVDDYEYEEISDGQQICPEKHANIFDKIFFSWMNPLMTLGSKRPLTEKDVWYLDTWDQTETLFTSFQHSWDKELQKPQPWLLRALNNSLGGRFWWGGFWKIGNDCSQFVGPLLLNQLLKSMQEDAPAWMGYIYAFSIFVGVVFGVLCEAQYFQNVMRVGYRLRSALIAAVFRKSLRLTNEGRRKFQTGKITNLMTTDAESLQQICQSLHTMWSAPFRIIIALILLYQQLGVASLIGALLLVLMFPLQTVIISKMQKLTKEGLQRTDKRIGLMNEVLAAMDTVKCYAWENSFQSKVQTVRDDELSWFRKSQLLGALNMFILNSIPVLVTIVSFGVFTLLGGDLTPARAFTSLSLFAVLRFPLFMLPNIITQVVNANVSLKRLEEVLATEERILLPNPPIEPGEPAISIRNGYFSWDSKGDRPTLSNINLDVPLGSLVAVVGSTGEGKTSLISAILGELPATSDAIVTLRGSVAYVPQVSWIFNATVRDNILFGSPFDREKYERAIDVTSLKHDLELLPGGDLTEIGERGVNISGGQKQRVSMARAVYSNSDVYIFDDPLSALDAHVGQQVFEKCIKRELGQKTRVLVTNQLHFLSQVDRIVLVHEGTVKEEGTYEELSSNGPLFQRLMENAGKVEEYSEENGEAEADQTAEQPVANGNTNGLQMDGSDDKKSKEGNKKGGKSVLIKQEERETGVVSWRVLKRYQDALGGAWVVMMLLLCYVLTEVFRVTSSTWLSEWTDAGTPKSHGPLFYNLIYALLSFGQVLVTLTNSYWLIMSSLYAAKKLHDNMLHSILRAPMSFFHTNPLGRIINRFAKDLGDIDRTVAVFVNMFMGQVSQLLSTVVLIGIVSTLSLWAIMPLLVLFYGAYLYYQNTAREVKRMDSISRSPVYAQFGEALNGLSTIRAYKAYDRMADINGRSMDNNIRFTLVNMGANRWLGIRLETLGGLMIWLTASFAVMQNGRAENQQAFASTMGLLLSYALNITSLLTGVLRLASLAENSLNAVERVGNYIEIPPEAPPVIENNRPPPGWPSSGSIKFEDVVLRYRPQLPPVLHGVSFFIHPTDKVGIVGRTGAGKSSLLNALFRIVEVEKGRILIDDCDVGKFGLMDLRKVLGIIPQSPVLFSGTVRFNLDPFGEHNDADLWESLERAHLKDTIRRNPLGLDAEVSEAGENFSVGQRQLLSLSRALLRRSKILVLDEATAAVDVRTDALIQKTIREEFKSCTMLIIAHRLNTIIDCDKILVLDSGRVQEFSSPENLLSNEGSSFSKMVQSTGAANAEYLRSLVLDNKRAKDDSHHLQGQRKWLASSRWAAAAQFALAASLTSSHNDLQSLEIEDDSSILKRTNDAVVTLRSVLEGKHDKEIAESLEEHNISREGWLSSLYRMVEGLAVMSRLARNRMQQPDYNFEGNTFDWDNVEM.

A run of 9 helical transmembrane segments spans residues 37 to 57 (FVLG…IWLA), 76 to 96 (FLAL…IMGI), 109 to 129 (FEAF…VMIL), 145 to 165 (FAVI…LSVK), 172 to 192 (VLYL…LLFM), 336 to 356 (AWMG…GVLC), 440 to 460 (VASL…TVII), 527 to 547 (FILN…FTLL), and 557 to 577 (FTSL…PNII). The region spanning 302-582 (FWWGGFWKIG…LPNIITQVVN (281 aa)) is the ABC transmembrane type-1 1 domain. One can recognise an ABC transporter 1 domain in the interval 614–838 (ISIRNGYFSW…GPLFQRLMEN (225 aa)). An ATP-binding site is contributed by 649-656 (GSTGEGKT). The tract at residues 842–890 (VEEYSEENGEAEADQTAEQPVANGNTNGLQMDGSDDKKSKEGNKKGGKS) is disordered. A compositionally biased stretch (acidic residues) spans 845–856 (YSEENGEAEADQ). Residues 857–870 (TAEQPVANGNTNGL) show a composition bias toward polar residues. Residues 875–885 (SDDKKSKEGNK) show a composition bias toward basic and acidic residues. The next 6 helical transmembrane spans lie at 914-934 (ALGG…TEVF), 955-975 (GPLF…LVTL), 1032-1054 (AVFV…LIGI), 1058-1077 (LSLW…YLYY), 1143-1163 (LGIR…SFAV), and 1177-1197 (STMG…TGVL). Residues 921–1205 (VMMLLLCYVL…VLRLASLAEN (285 aa)) enclose the ABC transmembrane type-1 2 domain. The segment at 1236-1251 (WPSSGSIKFEDVVLRY) is interaction with calmodulin and FKP42/TWD1. An ABC transporter 2 domain is found at 1242 to 1476 (IKFEDVVLRY…EGSSFSKMVQ (235 aa)). 1276–1283 (GRTGAGKS) is a binding site for ATP.

Belongs to the ABC transporter superfamily. ABCC family. Conjugate transporter (TC 3.A.1.208) subfamily. Interacts with FKBP42/TWD1 and probably with calmodulin (CaM). Ubiquitous, at low levels.

Its subcellular location is the vacuole membrane. The enzyme catalyses ATP + H2O + xenobioticSide 1 = ADP + phosphate + xenobioticSide 2.. With respect to regulation, reciprocal promotion of DNP-GS and E(2)17betaG uptake. E(2)17betaG uptake is also stimulated by GSH and S-methyl-glutathione (S-methyl-GS), and, to a lower extent, by GSSG and C3G-GS. Metolachlor-GS and decyl-GS slightly inhibit E(2)17betaG uptake. Its function is as follows. Pump for glutathione S-conjugates. Mediates the transport of S-conjugates such as GSH, S-(2,4-dinitrophenyl)-glutathione (DNP-GS), GSSG, cyanidin 3-glucoside-GS (C3G-GS) and metolachlor-GS (MOC-GS), glucuronides such as 17-beta-estradiol 17-(beta-D-glucuronide) (E(2)17betaG), and of the chlorophyll catabolite such as B.napus nonfluorescent chlorophyll catabolite (Bn-NCC-1). This Arabidopsis thaliana (Mouse-ear cress) protein is ABC transporter C family member 2 (ABCC2).